Here is a 260-residue protein sequence, read N- to C-terminus: Global transcriptional regulator CodY (260 aa).

Residues 1 to 159 (MPNLLEKTRK…SSTVVGIQLL (159 aa)) form a GAF domain region. A DNA-binding region (H-T-H motif) is located at residues 207 to 226 (ASVIADRIGITRSVIVNALR).

Belongs to the CodY family.

Its subcellular location is the cytoplasm. Functionally, DNA-binding global transcriptional regulator which is involved in the adaptive response to starvation and acts by directly or indirectly controlling the expression of numerous genes in response to nutrient availability. During rapid exponential growth, CodY is highly active and represses genes whose products allow adaptation to nutrient depletion. This chain is Global transcriptional regulator CodY, found in Streptococcus uberis (strain ATCC BAA-854 / 0140J).